The sequence spans 427 residues: Homogentisate 1,2-dioxygenase (427 aa).

H285 functions as the Proton acceptor in the catalytic mechanism. Residues H328 and E334 each contribute to the Fe cation site. The homogentisate site is built by Y343 and H364. Residue H364 coordinates Fe cation.

This sequence belongs to the homogentisate dioxygenase family. In terms of assembly, hexamer; dimer of trimers. Requires Fe cation as cofactor.

It catalyses the reaction homogentisate + O2 = 4-maleylacetoacetate + H(+). It participates in amino-acid degradation; L-phenylalanine degradation; acetoacetate and fumarate from L-phenylalanine: step 4/6. Functionally, involved in the catabolism of homogentisate (2,5-dihydroxyphenylacetate or 2,5-OH-PhAc), a central intermediate in the degradation of phenylalanine and tyrosine. Catalyzes the oxidative ring cleavage of the aromatic ring of homogentisate to yield maleylacetoacetate. This Caulobacter sp. (strain K31) protein is Homogentisate 1,2-dioxygenase.